Consider the following 104-residue polypeptide: Pyrimidine/purine nucleoside phosphorylase (104 aa).

Belongs to the nucleoside phosphorylase PpnP family.

The catalysed reaction is a purine D-ribonucleoside + phosphate = a purine nucleobase + alpha-D-ribose 1-phosphate. The enzyme catalyses adenosine + phosphate = alpha-D-ribose 1-phosphate + adenine. It carries out the reaction cytidine + phosphate = cytosine + alpha-D-ribose 1-phosphate. It catalyses the reaction guanosine + phosphate = alpha-D-ribose 1-phosphate + guanine. The catalysed reaction is inosine + phosphate = alpha-D-ribose 1-phosphate + hypoxanthine. The enzyme catalyses thymidine + phosphate = 2-deoxy-alpha-D-ribose 1-phosphate + thymine. It carries out the reaction uridine + phosphate = alpha-D-ribose 1-phosphate + uracil. It catalyses the reaction xanthosine + phosphate = alpha-D-ribose 1-phosphate + xanthine. In terms of biological role, catalyzes the phosphorolysis of diverse nucleosides, yielding D-ribose 1-phosphate and the respective free bases. Can use uridine, adenosine, guanosine, cytidine, thymidine, inosine and xanthosine as substrates. Also catalyzes the reverse reactions. This Geotalea uraniireducens (strain Rf4) (Geobacter uraniireducens) protein is Pyrimidine/purine nucleoside phosphorylase.